Reading from the N-terminus, the 356-residue chain is Leucine-rich repeat and transmembrane domain-containing protein 1 (356 aa).

The first 32 residues, 1–32 (MLNEGLCCGAWAMKGTLLLVSSVGLLLPGVGS), serve as a signal peptide directing secretion. An LRRNT domain is found at 33-62 (CPMKCLCHPSSNSVDCSGQGLSKVPRDLPP). The Extracellular portion of the chain corresponds to 33 to 299 (CPMKCLCHPS…PTNLRHAVAT (267 aa)). 5 LRR repeats span residues 63–84 (WTVT…AFQS), 87–108 (LLST…AFYG), 111–132 (HLRV…FAHA), 135–156 (GLRE…LGKP), and 159–180 (NLTV…LLEA). N-linked (GlcNAc...) asparagine glycans are attached at residues asparagine 92 and asparagine 116. A glycan (N-linked (GlcNAc...) asparagine) is linked at asparagine 159. Residues 192-246 (NPWICDCHLLGLKLWLERFTFQGGETDGAICRLPEPWQGKALLSIPHELYQPCSL) form the LRRCT domain. The segment covering 255-277 (LVQQPGSAPQDAQKSHENSSGQQ) has biased composition (polar residues). The disordered stretch occupies residues 255-288 (LVQQPGSAPQDAQKSHENSSGQQDPLECEAKPKP). The chain crosses the membrane as a helical span at residues 300 to 320 (VVITGVVCGIVCLMMLAAAIY). Over 321–356 (GCTYAAITAQYQGRPLASARKSEKMGSKELMDSSSA) the chain is Cytoplasmic.

The protein localises to the membrane. The protein is Leucine-rich repeat and transmembrane domain-containing protein 1 (Lrtm1) of Mus musculus (Mouse).